A 232-amino-acid chain; its full sequence is Small ribosomal subunit protein uS3 (232 aa).

In terms of domain architecture, KH type-2 spans 39-107 (IRAFLKKKLY…EVNVNIKEER (69 aa)). A disordered region spans residues 211-232 (GVQPEKTEEEAPKKTRRARRGK). A compositionally biased stretch (basic and acidic residues) spans 213-223 (QPEKTEEEAPK).

The protein belongs to the universal ribosomal protein uS3 family. Part of the 30S ribosomal subunit. Forms a tight complex with proteins S10 and S14.

Functionally, binds the lower part of the 30S subunit head. Binds mRNA in the 70S ribosome, positioning it for translation. In Campylobacter concisus (strain 13826), this protein is Small ribosomal subunit protein uS3.